Reading from the N-terminus, the 398-residue chain is Succinate--CoA ligase [ADP-forming] subunit beta (398 aa).

The region spanning 9 to 250 is the ATP-grasp domain; sequence KQLFARYGVP…VDEEDPVELQ (242 aa). ATP is bound by residues lysine 50, 57 to 59, glutamate 104, leucine 107, and glutamate 112; that span reads GRG. Positions 205 and 219 each coordinate Mg(2+). Substrate is bound by residues asparagine 270 and 327–329; that span reads GIM.

The protein belongs to the succinate/malate CoA ligase beta subunit family. As to quaternary structure, heterotetramer of two alpha and two beta subunits. Mg(2+) serves as cofactor.

It catalyses the reaction succinate + ATP + CoA = succinyl-CoA + ADP + phosphate. The catalysed reaction is GTP + succinate + CoA = succinyl-CoA + GDP + phosphate. It participates in carbohydrate metabolism; tricarboxylic acid cycle; succinate from succinyl-CoA (ligase route): step 1/1. Functionally, succinyl-CoA synthetase functions in the citric acid cycle (TCA), coupling the hydrolysis of succinyl-CoA to the synthesis of either ATP or GTP and thus represents the only step of substrate-level phosphorylation in the TCA. The beta subunit provides nucleotide specificity of the enzyme and binds the substrate succinate, while the binding sites for coenzyme A and phosphate are found in the alpha subunit. In Sorangium cellulosum (strain So ce56) (Polyangium cellulosum (strain So ce56)), this protein is Succinate--CoA ligase [ADP-forming] subunit beta.